The following is a 317-amino-acid chain: Putative GTPase PH0274 (317 aa).

GTP contacts are provided by residues Gly-54–Thr-62, Asp-196, and Val-231–Thr-233.

Belongs to the SIMIBI class G3E GTPase family. ArgK/MeaB subfamily.

Its function is as follows. May have GTPase activity. May also bind and hydrolyze ATP. May function as chaperone. The protein is Putative GTPase PH0274 of Pyrococcus horikoshii (strain ATCC 700860 / DSM 12428 / JCM 9974 / NBRC 100139 / OT-3).